Here is a 433-residue protein sequence, read N- to C-terminus: Adenylosuccinate synthetase (433 aa).

GTP is bound by residues 13 to 19 (GDEGKGK) and 41 to 43 (GHT). Catalysis depends on Asp-14, which acts as the Proton acceptor. Positions 14 and 41 each coordinate Mg(2+). IMP-binding positions include 14-17 (DEGK), 39-42 (NAGH), Thr-130, Arg-144, Gln-225, Thr-240, and Arg-304. His-42 functions as the Proton donor in the catalytic mechanism. Position 300–306 (300–306 (STTGRKR)) interacts with substrate. GTP is bound by residues Arg-306, 332 to 334 (KLD), and 414 to 416 (STG).

This sequence belongs to the adenylosuccinate synthetase family. In terms of assembly, homodimer. It depends on Mg(2+) as a cofactor.

The protein localises to the cytoplasm. The catalysed reaction is IMP + L-aspartate + GTP = N(6)-(1,2-dicarboxyethyl)-AMP + GDP + phosphate + 2 H(+). It functions in the pathway purine metabolism; AMP biosynthesis via de novo pathway; AMP from IMP: step 1/2. Its function is as follows. Plays an important role in the de novo pathway of purine nucleotide biosynthesis. Catalyzes the first committed step in the biosynthesis of AMP from IMP. This is Adenylosuccinate synthetase from Buchnera aphidicola subsp. Acyrthosiphon pisum (strain Tuc7).